Consider the following 79-residue polypeptide: Small ribosomal subunit protein uS17 (79 aa).

The protein belongs to the universal ribosomal protein uS17 family. In terms of assembly, part of the 30S ribosomal subunit.

In terms of biological role, one of the primary rRNA binding proteins, it binds specifically to the 5'-end of 16S ribosomal RNA. This chain is Small ribosomal subunit protein uS17, found in Bartonella henselae (strain ATCC 49882 / DSM 28221 / CCUG 30454 / Houston 1) (Rochalimaea henselae).